The primary structure comprises 37 residues: Large ribosomal subunit protein bL36 (37 aa).

Belongs to the bacterial ribosomal protein bL36 family.

This is Large ribosomal subunit protein bL36 from Salinispora arenicola (strain CNS-205).